The primary structure comprises 255 residues: Taurine import ATP-binding protein TauB (255 aa).

Positions 2–229 (LQISHLYADY…RFVAGESSRS (228 aa)) constitute an ABC transporter domain. Residue 34–41 (GPSGCGKT) coordinates ATP.

The protein belongs to the ABC transporter superfamily. Taurine importer (TC 3.A.1.17.1) family. As to quaternary structure, the complex is composed of two ATP-binding proteins (TauB), two transmembrane proteins (TauC) and a solute-binding protein (TauA).

The protein localises to the cell inner membrane. It carries out the reaction taurine(out) + ATP + H2O = taurine(in) + ADP + phosphate + H(+). Functionally, part of the ABC transporter complex TauABC involved in taurine import. Responsible for energy coupling to the transport system. The protein is Taurine import ATP-binding protein TauB of Escherichia coli (strain K12).